Consider the following 174-residue polypeptide: ATP-dependent protease subunit HslV (174 aa).

Threonine 2 is a catalytic residue. Residues glycine 157, cysteine 160, and threonine 163 each contribute to the Na(+) site.

This sequence belongs to the peptidase T1B family. HslV subfamily. In terms of assembly, a double ring-shaped homohexamer of HslV is capped on each side by a ring-shaped HslU homohexamer. The assembly of the HslU/HslV complex is dependent on binding of ATP.

It localises to the cytoplasm. The catalysed reaction is ATP-dependent cleavage of peptide bonds with broad specificity.. Its activity is regulated as follows. Allosterically activated by HslU binding. Protease subunit of a proteasome-like degradation complex believed to be a general protein degrading machinery. In Shewanella halifaxensis (strain HAW-EB4), this protein is ATP-dependent protease subunit HslV.